The following is a 460-amino-acid chain: GTPase Der (460 aa).

EngA-type G domains follow at residues 9 to 171 (KTIA…SLNQ) and 199 to 370 (IQVG…ECFS). GTP contacts are provided by residues 15-22 (GQPNVGKS), 62-66 (DTGGM), 123-126 (NKID), 205-212 (GRVNVGKS), 252-256 (DTAGI), and 316-319 (NKWD). Residues 371–455 (RRIPTSLLNS…PLILNAKDKK (85 aa)) form the KH-like domain.

It belongs to the TRAFAC class TrmE-Era-EngA-EngB-Septin-like GTPase superfamily. EngA (Der) GTPase family. In terms of assembly, associates with the 50S ribosomal subunit.

Its function is as follows. GTPase that plays an essential role in the late steps of ribosome biogenesis. This chain is GTPase Der, found in Helicobacter pylori (strain G27).